Consider the following 572-residue polypeptide: Probable lysosomal cobalamin transporter (572 aa).

9 helical membrane-spanning segments follow: residues 8–28 (VIWFAYLIVIFVLIVVASVFI), 40–60 (FVTFICVFSIAALLATVMLLP), 95–115 (IIYYSLYFLDALLCFVGIPFA), 145–165 (TLTFIAVVIALVLVGFFAPMM), 188–208 (AFTFLLGFVTIIGSCLYAFYT), 314–334 (GGFCLFLVGLSTWISLLMTVV), 374–394 (IIFALIVFFFFWGSVVGVVAV), 421–441 (AVLTLITLGLNYSIVMMLVPG), and 499–519 (VALNFPLFGALLLWAHFLFLA). The segment at 522 to 544 (GRRRGRGRESVSKHQKKRQSYMR) is disordered.

This sequence belongs to the LIMR family. LMBRD1 subfamily.

It localises to the lysosome membrane. Probable lysosomal cobalamin transporter. Required to export cobalamin from lysosomes allowing its conversion to cofactors. The protein is Probable lysosomal cobalamin transporter of Aspergillus fumigatus (strain ATCC MYA-4609 / CBS 101355 / FGSC A1100 / Af293) (Neosartorya fumigata).